Here is a 138-residue protein sequence, read N- to C-terminus: Cysteine desulfuration protein SufE (138 aa).

Residue cysteine 51 is the Cysteine persulfide intermediate of the active site.

The protein belongs to the SufE family. Homodimer. Interacts with SufS.

The protein resides in the cytoplasm. Its pathway is cofactor biosynthesis; iron-sulfur cluster biosynthesis. Participates in cysteine desulfuration mediated by SufS. Cysteine desulfuration mobilizes sulfur from L-cysteine to yield L-alanine and constitutes an essential step in sulfur metabolism for biosynthesis of a variety of sulfur-containing biomolecules. Functions as a sulfur acceptor for SufS, by mediating the direct transfer of the sulfur atom from the S-sulfanylcysteine of SufS, an intermediate product of cysteine desulfuration process. The protein is Cysteine desulfuration protein SufE of Shigella flexneri serotype 5b (strain 8401).